We begin with the raw amino-acid sequence, 140 residues long: Nucleoside diphosphate kinase (140 aa).

K10, F58, R86, T92, R103, and N113 together coordinate ATP. The active-site Pros-phosphohistidine intermediate is H116.

It belongs to the NDK family. In terms of assembly, homotetramer. Mg(2+) serves as cofactor.

Its subcellular location is the cytoplasm. It catalyses the reaction a 2'-deoxyribonucleoside 5'-diphosphate + ATP = a 2'-deoxyribonucleoside 5'-triphosphate + ADP. The enzyme catalyses a ribonucleoside 5'-diphosphate + ATP = a ribonucleoside 5'-triphosphate + ADP. Major role in the synthesis of nucleoside triphosphates other than ATP. The ATP gamma phosphate is transferred to the NDP beta phosphate via a ping-pong mechanism, using a phosphorylated active-site intermediate. This chain is Nucleoside diphosphate kinase, found in Anaplasma phagocytophilum (strain HZ).